The sequence spans 741 residues: NAD(P)H-quinone oxidoreductase subunit 5, chloroplastic (741 aa).

The next 16 membrane-spanning stretches (helical) occupy residues 9–29 (WIIP…LLLF), 40–60 (WAFQ…NLSI), 89–109 (IDPL…MVLI), 125–145 (FAYM…SNLI), 147–167 (IYIF…FWFT), 185–205 (GDFG…SFEF), 219–239 (NEVN…GAIA), 258–278 (TPIS…FPVA), 284–304 (FIVI…TVFF), 327–347 (LGYM…FHLI), 354–374 (ALLF…VGYC), 396–416 (NSFL…CFWS), 425–445 (WLYS…TAFY), 549–569 (LFPI…GIPF), 605–625 (VFSV…YKPV), and 721–741 (YLFF…FLNL).

It belongs to the complex I subunit 5 family. NDH is composed of at least 16 different subunits, 5 of which are encoded in the nucleus.

The protein localises to the plastid. It is found in the chloroplast thylakoid membrane. The catalysed reaction is a plastoquinone + NADH + (n+1) H(+)(in) = a plastoquinol + NAD(+) + n H(+)(out). It catalyses the reaction a plastoquinone + NADPH + (n+1) H(+)(in) = a plastoquinol + NADP(+) + n H(+)(out). NDH shuttles electrons from NAD(P)H:plastoquinone, via FMN and iron-sulfur (Fe-S) centers, to quinones in the photosynthetic chain and possibly in a chloroplast respiratory chain. The immediate electron acceptor for the enzyme in this species is believed to be plastoquinone. Couples the redox reaction to proton translocation, and thus conserves the redox energy in a proton gradient. This is NAD(P)H-quinone oxidoreductase subunit 5, chloroplastic (ndhF) from Guizotia abyssinica (Niger).